The primary structure comprises 68 residues: MAKNKDVRVTVILECTSCAQNDVHGNKVATGISRYITQKNRHNTPNRLEFQKFCPRCYKHTLHGEIKN.

The protein belongs to the bacterial ribosomal protein bL33 family.

It is found in the plastid. This is Large ribosomal subunit protein bL33c from Cuscuta exaltata (Tall dodder).